The sequence spans 356 residues: L-lactate dehydrogenase A (356 aa).

Residues 75–80 (DALPDK) and Arg121 contribute to the NAD(+) site. Substrate contacts are provided by Arg128, Asn160, and Arg191. Asn160 provides a ligand contact to NAD(+). His215 acts as the Proton acceptor in catalysis. Thr270 provides a ligand contact to substrate.

This sequence belongs to the LDH/MDH superfamily. LDH family. In terms of assembly, tetramer that arise from random association of LDH-A and LDH-B.

It catalyses the reaction (S)-lactate + NAD(+) = pyruvate + NADH + H(+). It participates in fermentation; pyruvate fermentation to lactate; (S)-lactate from pyruvate: step 1/1. The polypeptide is L-lactate dehydrogenase A (Hordeum vulgare (Barley)).